A 193-amino-acid polypeptide reads, in one-letter code: Probable nicotinate-nucleotide adenylyltransferase (193 aa).

Belongs to the NadD family.

It catalyses the reaction nicotinate beta-D-ribonucleotide + ATP + H(+) = deamido-NAD(+) + diphosphate. The protein operates within cofactor biosynthesis; NAD(+) biosynthesis; deamido-NAD(+) from nicotinate D-ribonucleotide: step 1/1. Catalyzes the reversible adenylation of nicotinate mononucleotide (NaMN) to nicotinic acid adenine dinucleotide (NaAD). The sequence is that of Probable nicotinate-nucleotide adenylyltransferase from Flavobacterium psychrophilum (strain ATCC 49511 / DSM 21280 / CIP 103535 / JIP02/86).